We begin with the raw amino-acid sequence, 241 residues long: Uridylate kinase (241 aa).

Residue 14–17 participates in ATP binding; that stretch reads KASG. The interval 22–27 is involved in allosteric activation by GTP; that stretch reads GDQGFG. A UMP-binding site is contributed by glycine 56. ATP is bound by residues glycine 57 and arginine 61. UMP is bound by residues aspartate 76 and 137-144; that span reads TGNPFFTT. The ATP site is built by threonine 164, glutamine 165, tyrosine 170, and aspartate 173.

The protein belongs to the UMP kinase family. Homohexamer.

Its subcellular location is the cytoplasm. The catalysed reaction is UMP + ATP = UDP + ADP. Its pathway is pyrimidine metabolism; CTP biosynthesis via de novo pathway; UDP from UMP (UMPK route): step 1/1. Allosterically activated by GTP. Inhibited by UTP. Its function is as follows. Catalyzes the reversible phosphorylation of UMP to UDP. The chain is Uridylate kinase from Agrobacterium fabrum (strain C58 / ATCC 33970) (Agrobacterium tumefaciens (strain C58)).